Reading from the N-terminus, the 197-residue chain is uncharacterized protein (197 aa).

Residues 1-31 (MMHFRKKSSISNTSDHDGANRASDVKISEDD) are disordered. A phosphoserine mark is found at Ser-11 and Ser-23. Residues 14–31 (SDHDGANRASDVKISEDD) are compositionally biased toward basic and acidic residues. Residues Lys-26 and Lys-32 each participate in a glycyl lysine isopeptide (Lys-Gly) (interchain with G-Cter in ubiquitin) cross-link. Residues 157-197 (VGGASSQMYGEQAVYQPQQHVQTEEKQKKKKKGLFGRMKKK) are disordered. Over residues 158-177 (GGASSQMYGEQAVYQPQQHV) the composition is skewed to polar residues. Residues 184–197 (KKKKKGLFGRMKKK) show a composition bias toward basic residues.

This sequence to yeast YGR273c.

This is an uncharacterized protein from Saccharomyces cerevisiae (strain ATCC 204508 / S288c) (Baker's yeast).